A 244-amino-acid chain; its full sequence is Eukaryotic translation initiation factor 6 (244 aa).

Ser-174 and Ser-175 each carry phosphoserine; by CK1.

The protein belongs to the eIF-6 family. As to quaternary structure, monomer. Associates with the 60S ribosomal subunit. In terms of processing, phosphorylation at Ser-174 and Ser-175 promotes nuclear export.

Its subcellular location is the cytoplasm. It is found in the nucleus. The protein localises to the nucleolus. Binds to the 60S ribosomal subunit and prevents its association with the 40S ribosomal subunit to form the 80S initiation complex in the cytoplasm. Is also involved in ribosome biogenesis. Associates with pre-60S subunits in the nucleus and is involved in its nuclear export. This is Eukaryotic translation initiation factor 6 (tif6) from Schizosaccharomyces pombe (strain 972 / ATCC 24843) (Fission yeast).